Consider the following 169-residue polypeptide: Photosystem I assembly protein Ycf3 (169 aa).

TPR repeat units lie at residues 35–68 (AFTY…ETDP), 72–105 (SYIL…NPSL), and 120–153 (GEQA…APGN).

This sequence belongs to the Ycf3 family.

It localises to the plastid. The protein resides in the chloroplast thylakoid membrane. Functionally, essential for the assembly of the photosystem I (PSI) complex. May act as a chaperone-like factor to guide the assembly of the PSI subunits. The protein is Photosystem I assembly protein Ycf3 of Pinus koraiensis (Korean pine).